The sequence spans 56 residues: Small ribosomal subunit protein uS14 (56 aa).

Positions 21, 24, 39, and 42 each coordinate Zn(2+).

It belongs to the universal ribosomal protein uS14 family. As to quaternary structure, component of the 40S small ribosomal subunit. Requires Zn(2+) as cofactor.

Its subcellular location is the cytoplasm. The protein resides in the cytosol. It localises to the rough endoplasmic reticulum. The protein is Small ribosomal subunit protein uS14 (RpS29) of Bombyx mori (Silk moth).